A 24-amino-acid polypeptide reads, in one-letter code: Brevinin-1Lb (24 aa).

A disulfide bridge connects residues cysteine 18 and cysteine 24.

Expressed by the skin glands.

Its subcellular location is the secreted. Functionally, antibacterial activity against Gram-positive bacterium S.aureus and Gram-negative bacterium E.coli. In Rana luteiventris (Columbia spotted frog), this protein is Brevinin-1Lb.